We begin with the raw amino-acid sequence, 476 residues long: Ribulose bisphosphate carboxylase large chain (476 aa).

A propeptide spanning residues 1–2 (MS) is cleaved from the precursor. Proline 3 carries the N-acetylproline modification. Lysine 14 carries the N6,N6,N6-trimethyllysine modification. The substrate site is built by asparagine 123 and threonine 173. Catalysis depends on lysine 175, which acts as the Proton acceptor. Lysine 177 contacts substrate. Residues lysine 201, aspartate 203, and glutamate 204 each contribute to the Mg(2+) site. Lysine 201 is subject to N6-carboxylysine. Catalysis depends on histidine 294, which acts as the Proton acceptor. Substrate-binding residues include arginine 295, histidine 327, and serine 379.

The protein belongs to the RuBisCO large chain family. Type I subfamily. Heterohexadecamer of 8 large chains and 8 small chains; disulfide-linked. The disulfide link is formed within the large subunit homodimers. The cofactor is Mg(2+). Post-translationally, the disulfide bond which can form in the large chain dimeric partners within the hexadecamer appears to be associated with oxidative stress and protein turnover.

It localises to the plastid. The protein resides in the chloroplast. It carries out the reaction 2 (2R)-3-phosphoglycerate + 2 H(+) = D-ribulose 1,5-bisphosphate + CO2 + H2O. The catalysed reaction is D-ribulose 1,5-bisphosphate + O2 = 2-phosphoglycolate + (2R)-3-phosphoglycerate + 2 H(+). In terms of biological role, ruBisCO catalyzes two reactions: the carboxylation of D-ribulose 1,5-bisphosphate, the primary event in carbon dioxide fixation, as well as the oxidative fragmentation of the pentose substrate in the photorespiration process. Both reactions occur simultaneously and in competition at the same active site. This is Ribulose bisphosphate carboxylase large chain from Phaseolus vulgaris (Kidney bean).